Consider the following 440-residue polypeptide: Trigger factor (440 aa).

One can recognise a PPIase FKBP-type domain in the interval 163–248 (GDTVNIDFDG…INEIKYKNVP (86 aa)).

The protein belongs to the FKBP-type PPIase family. Tig subfamily.

It localises to the cytoplasm. The catalysed reaction is [protein]-peptidylproline (omega=180) = [protein]-peptidylproline (omega=0). Involved in protein export. Acts as a chaperone by maintaining the newly synthesized protein in an open conformation. Functions as a peptidyl-prolyl cis-trans isomerase. This Staphylococcus carnosus (strain TM300) protein is Trigger factor.